The primary structure comprises 485 residues: NGFI-A-binding protein 1 (485 aa).

An NCD1 region spans residues 4–82 (ALPRTLGELQ…RDWVTNPGLF (79 aa)). Glycyl lysine isopeptide (Lys-Gly) (interchain with G-Cter in SUMO2) cross-links involve residues Lys126, Lys129, and Lys143. The tract at residues 160 to 187 (WQGHHATESEHSLSPADVGSPASPKESS) is disordered. A phosphoserine mark is found at Ser171 and Ser182. Lys211 participates in a covalent cross-link: Glycyl lysine isopeptide (Lys-Gly) (interchain with G-Cter in SUMO2). Residues 220-309 (LLKNNKKLAK…ARQVSREVTY (90 aa)) are NCD2. Positions 306-337 (EVTYKYTYRTTRLKCGERDELSPKRIKVEDGF) are necessary for nuclear localization. Position 327 is a phosphoserine (Ser327). Lys332 participates in a covalent cross-link: Glycyl lysine isopeptide (Lys-Gly) (interchain with G-Cter in SUMO1); alternate. Lys332 is covalently cross-linked (Glycyl lysine isopeptide (Lys-Gly) (interchain with G-Cter in SUMO2); alternate). Residues Lys354, Lys368, and Lys372 each participate in a glycyl lysine isopeptide (Lys-Gly) (interchain with G-Cter in SUMO2) cross-link. The disordered stretch occupies residues 398–432 (RQSSGEHSPDGLPSDGSDGQGERPLNLRMPNVQNR). Ser405 is modified (phosphoserine). Residues Lys452, Lys463, and Lys475 each participate in a glycyl lysine isopeptide (Lys-Gly) (interchain with G-Cter in SUMO2) cross-link. Lys478 participates in a covalent cross-link: Glycyl lysine isopeptide (Lys-Gly) (interchain with G-Cter in SUMO1); alternate. Residue Lys478 forms a Glycyl lysine isopeptide (Lys-Gly) (interchain with G-Cter in SUMO2); alternate linkage.

It belongs to the NAB family. In terms of assembly, homomultimers may associate with EGR1 bound to DNA.

The protein resides in the nucleus. Acts as a transcriptional repressor for zinc finger transcription factors EGR1 and EGR2. The protein is NGFI-A-binding protein 1 (NAB1) of Mesocricetus auratus (Golden hamster).